A 469-amino-acid polypeptide reads, in one-letter code: GTPase Der (469 aa).

2 EngA-type G domains span residues 3-167 (PTLV…PEEE) and 176-349 (PKIA…AAAF). Residues 9 to 16 (GRPNVGKS), 56 to 60 (DTGGL), 119 to 122 (NKAE), 182 to 189 (GRPNVGKS), 229 to 233 (DTAGV), and 294 to 297 (NKWD) contribute to the GTP site. The 87-residue stretch at 350 to 436 (IKLSTPKLTR…RIQIKEDEGK (87 aa)) folds into the KH-like domain. Residues 432 to 443 (EDEGKNPFEGKK) show a composition bias toward basic and acidic residues. The tract at residues 432-469 (EDEGKNPFEGKKRAPLSESEATRMRRKKRVRRKVYGAD) is disordered. Residues 455 to 469 (MRRKKRVRRKVYGAD) show a composition bias toward basic residues.

It belongs to the TRAFAC class TrmE-Era-EngA-EngB-Septin-like GTPase superfamily. EngA (Der) GTPase family. As to quaternary structure, associates with the 50S ribosomal subunit.

Its function is as follows. GTPase that plays an essential role in the late steps of ribosome biogenesis. This is GTPase Der from Thiobacillus denitrificans (strain ATCC 25259 / T1).